The following is a 157-amino-acid chain: Hydra actinoporin-like toxin 3 (157 aa).

A signal peptide spans 1-14 (LEATVSRNKKYKFT). The Cell attachment site signature appears at 129–131 (IAG).

It belongs to the actinoporin family. HALT subfamily. As to quaternary structure, octamer or nonamer in membranes. Monomer in the soluble state. In vitro, interacts with folate receptor alpha (of target organism).

It localises to the nematocyst. Its subcellular location is the secreted. It is found in the target cell membrane. In terms of biological role, pore-forming protein that forms hydrophilic pores and causes cytolysis. Compared to equinatoxin-2 (AC P61914), it reveals lower cytolysis activity (5-12-fold difference, tested on erythrocytes), a larger pore size (probably 2-3 nm) and different affinity to membrane lipids (100-fold lower affinity to sphingomyelin). Binds to the two sphingolipids, lysophosphatidic acid (LPA) and sphingosine-1-phosphate (S1P). Does not bind (or only weakly) to sulfatides (SFT). Shows cytolytic activity on HeLa cells, with a different potency than its paralogs (from most potent to less potent: HALT-4&gt;HALT-6~HALT-1&gt;HALT-3&gt;HALT-7&gt;HALT-2). Pore formation is a multi-step process that involves specific recognition of membrane lipid by a protein aromatic residues rich region, firm binding to the membrane (mainly driven by hydrophobic interactions) accompanied by the transfer of the N-terminal region to the lipid-water interface and finally pore formation after oligomerization of monomers. In vitro, binds to the folate receptor alpha (FOLR1), a GPI-anchored membrane protein that plays a major role in the uptake of folate/folic acid into cells via endocytosis, suggesting a possible involvement of this receptor in the mechanism of HALT-1-induced cell lysis. In vivo, does not cause visible paralysis in larvae of the blowfly Sarcophaga faculata, the most common arthropod prey of Hydra. This chain is Hydra actinoporin-like toxin 3, found in Hydra vulgaris (Hydra).